The chain runs to 427 residues: Mucorpepsin (427 aa).

The signal sequence occupies residues 1–22; sequence MLFSKISSAILLTAASFALTSA. A propeptide spans 23-66 (activation peptide); sequence RPVSKQSDADDKLLALPLTSVNRKYSQTKHGQQAAEKLGGIKAF. The Peptidase A1 domain maps to 86-418; the sequence is YAIPVSIGTP…DFGKNRIGFA (333 aa). Aspartate 104 is an active-site residue. The cysteines at positions 117 and 123 are disulfide-linked. Asparagine 254 is a glycosylation site (N-linked (GlcNAc...) asparagine). Residue aspartate 303 is part of the active site. Cysteines 338 and 382 form a disulfide.

The protein belongs to the peptidase A1 family.

The enzyme catalyses Hydrolysis of proteins, favoring hydrophobic residues at P1 and P1'. Clots milk. Does not accept Lys at P1, and hence does not activate trypsinogen.. Its function is as follows. This enzyme, capable of clotting milk is frequently used for cheese production. In Rhizomucor pusillus, this protein is Mucorpepsin.